The sequence spans 208 residues: MRKRLMAMLQNDISLQQQENALAKQSAKFHSKIAAKHQLIKRQQRKLEKLNQVANERKEDQENRSAFEQSMRDKLLREQQNLSEMQTELATKKQRRDELMGFVRTMSEATNTYINLKALPARVKGVALRPEQGEWIPFNCDAYDLKGLNALWSRLNEPSASTDKWQQLFSAEPTAKEKENANASLSSIIEIDLTSPTAHRSLAKMLEK.

Residues 31 to 101 (SKIAAKHQLI…KKQRRDELMG (71 aa)) adopt a coiled-coil conformation.

The protein belongs to the SPC25 family. As to quaternary structure, component of the Ndc80 complex, which is composed of Ndc80, Nuf2 and Spc25.

It is found in the nucleus. It localises to the chromosome. The protein resides in the centromere. The protein localises to the kinetochore. Its function is as follows. Acts as a component of the essential kinetochore-associated Ndc80 complex, which is required for chromosome segregation and spindle checkpoint activity during meiosis and mitosis. Required for kinetochore integrity and the organization of stable microtubule binding sites in the outer plate of the kinetochore. Participates in SAC signaling that responds specifically to disruptions in spindle microtubule dynamics. The NDC80 complex synergistically enhances the affinity of the SKA1 complex for microtubules and may allow the NDC80 complex to track depolymerizing microtubules. In Drosophila mojavensis (Fruit fly), this protein is Kinetochore protein Spc25.